The primary structure comprises 131 residues: Riboflavin kinase (131 aa).

CDP is bound at residue 11 to 16; the sequence is GLQKAG. Mg(2+)-binding residues include threonine 40 and asparagine 42. Residues threonine 98 and glutamate 106 each coordinate FMN. 111–114 lines the CDP pocket; it reads EKLR.

It belongs to the archaeal riboflavin kinase family. Mg(2+) is required as a cofactor.

It carries out the reaction riboflavin + CTP = CDP + FMN + H(+). Its pathway is cofactor biosynthesis; FMN biosynthesis; FMN from riboflavin (CTP route): step 1/1. In terms of biological role, catalyzes the CTP-dependent phosphorylation of riboflavin (vitamin B2) to form flavin mononucleotide (FMN). This is Riboflavin kinase from Methanosphaera stadtmanae (strain ATCC 43021 / DSM 3091 / JCM 11832 / MCB-3).